A 243-amino-acid chain; its full sequence is MHSQPYLLSPTPNTPFPPAEHALHEPNGLLAIGGDLTPQRLLAAYRSGIFPWFTEGQPPLWWSPDPRTVFHSDNIHLSRRFRRSLRTSTWTVRADTMFAAVIDACASTPRRGQDGTWITANMREAYLTLHQHGYAHSVEVFDGTMLVGGIYGVAIGRMFFGESMFSTHNGASKIALASLAYFLHTHSVPLIDAQVENQHLLNLGAERWPRRDFLTSVRRLITQTELPACWSVLFGEKLSRDLV.

The interval 1-22 (MHSQPYLLSPTPNTPFPPAEHA) is disordered.

It belongs to the L/F-transferase family.

It localises to the cytoplasm. It catalyses the reaction N-terminal L-lysyl-[protein] + L-leucyl-tRNA(Leu) = N-terminal L-leucyl-L-lysyl-[protein] + tRNA(Leu) + H(+). The enzyme catalyses N-terminal L-arginyl-[protein] + L-leucyl-tRNA(Leu) = N-terminal L-leucyl-L-arginyl-[protein] + tRNA(Leu) + H(+). It carries out the reaction L-phenylalanyl-tRNA(Phe) + an N-terminal L-alpha-aminoacyl-[protein] = an N-terminal L-phenylalanyl-L-alpha-aminoacyl-[protein] + tRNA(Phe). Functionally, functions in the N-end rule pathway of protein degradation where it conjugates Leu, Phe and, less efficiently, Met from aminoacyl-tRNAs to the N-termini of proteins containing an N-terminal arginine or lysine. The protein is Leucyl/phenylalanyl-tRNA--protein transferase of Xylella fastidiosa (strain M23).